A 210-amino-acid polypeptide reads, in one-letter code: Shikimate kinase (210 aa).

34-39 serves as a coordination point for ATP; that stretch reads GVGKSV. Serine 38 is a Mg(2+) binding site. Substrate contacts are provided by aspartate 56, arginine 80, and glycine 102. Arginine 140 lines the ATP pocket. Residue arginine 159 participates in substrate binding.

It belongs to the shikimate kinase family. As to quaternary structure, monomer. It depends on Mg(2+) as a cofactor.

The protein localises to the cytoplasm. The enzyme catalyses shikimate + ATP = 3-phosphoshikimate + ADP + H(+). It participates in metabolic intermediate biosynthesis; chorismate biosynthesis; chorismate from D-erythrose 4-phosphate and phosphoenolpyruvate: step 5/7. Catalyzes the specific phosphorylation of the 3-hydroxyl group of shikimic acid using ATP as a cosubstrate. The polypeptide is Shikimate kinase (Bartonella henselae (strain ATCC 49882 / DSM 28221 / CCUG 30454 / Houston 1) (Rochalimaea henselae)).